The primary structure comprises 55 residues: Large ribosomal subunit protein bL33B (55 aa).

The protein belongs to the bacterial ribosomal protein bL33 family.

This is Large ribosomal subunit protein bL33B from Rhodococcus jostii (strain RHA1).